Here is a 694-residue protein sequence, read N- to C-terminus: GRB2-associated-binding protein 1 (694 aa).

Serine 2 is modified (N-acetylserine). Residues 5–116 (EVVCSGWLRK…WVRCICDICG (112 aa)) enclose the PH domain. Residues 194–203 (PEPTRTHADS) are compositionally biased toward basic and acidic residues. Residues 194–231 (PEPTRTHADSAKSTSSETDCNDNVPSHKNPASSQSKHG) are disordered. The span at 204 to 230 (AKSTSSETDCNDNVPSHKNPASSQSKH) shows a compositional bias: polar residues. A phosphoserine mark is found at serine 251, serine 253, serine 266, and serine 304. The interval 309 to 378 (IPPTPGNTYQ…TDSSYCIPTA (70 aa)) is disordered. Polar residues predominate over residues 358–374 (DTCSITRTASDTDSSYC). Threonine 387 is subject to Phosphothreonine. Serine 402 and serine 454 each carry phosphoserine. Disordered regions lie at residues 492–532 (PAHM…VKPA) and 560–656 (DSSR…ADER). Residues 594–611 (PNLSSEDSNLFGSNSLDG) show a composition bias toward polar residues. The residue at position 627 (tyrosine 627) is a Phosphotyrosine. Threonine 638 bears the Phosphothreonine mark. Serine 651 carries the phosphoserine modification. Tyrosine 659 is modified (phosphotyrosine). Positions 668-694 (LALKSTREAWTDGRQSTESETPAKNVK) are disordered. Over residues 672–684 (STREAWTDGRQST) the composition is skewed to basic and acidic residues. Serine 683 carries the post-translational modification Phosphoserine. The span at 685-694 (ESETPAKNVK) shows a compositional bias: polar residues.

This sequence belongs to the GAB family. In terms of assembly, identified in a complex containing FRS2, GRB2, GAB1, PIK3R1 and SOS1. Forms a tripartite complex containing GAB1, METTL13 and SPRY2. Within the complex interacts with METTL13. Interacts with GRB2 and with other SH2-containing proteins. Interacts with phosphorylated LAT2. Interacts with PTPRJ. Interacts (phosphorylated) with PTPN11. Interacts with HCK. Post-translationally, phosphorylated in response to FGFR1 activation. Phosphorylated on tyrosine residue(s) by the epidermal growth factor receptor (EGFR) and the insulin receptor (INSR). Tyrosine phosphorylation of GAB1 mediates interaction with several proteins that contain SH2 domains. Phosphorylated on tyrosine residues by HCK upon IL6 signaling.

Adapter protein that plays a role in intracellular signaling cascades triggered by activated receptor-type kinases. Plays a role in FGFR1 signaling. Probably involved in signaling by the epidermal growth factor receptor (EGFR) and the insulin receptor (INSR). Involved in the MET/HGF-signaling pathway. In Bos taurus (Bovine), this protein is GRB2-associated-binding protein 1 (GAB1).